The following is an 85-amino-acid chain: Small ribosomal subunit protein bS16 (85 aa).

This sequence belongs to the bacterial ribosomal protein bS16 family.

In Xanthomonas euvesicatoria pv. vesicatoria (strain 85-10) (Xanthomonas campestris pv. vesicatoria), this protein is Small ribosomal subunit protein bS16.